The following is a 483-amino-acid chain: Serine/threonine-protein kinase BSK4 (483 aa).

Gly-2 carries the N-myristoyl glycine lipid modification. A Protein kinase domain is found at 56–322 (ENVVSEHGET…DTEVLSHVLM (267 aa)). ATP contacts are provided by residues 62–70 (HGETAPNVV) and Lys-84. The active-site Proton acceptor is Asp-178.

Belongs to the protein kinase superfamily. Ser/Thr protein kinase family.

Its subcellular location is the cell membrane. It catalyses the reaction L-seryl-[protein] + ATP = O-phospho-L-seryl-[protein] + ADP + H(+). The catalysed reaction is L-threonyl-[protein] + ATP = O-phospho-L-threonyl-[protein] + ADP + H(+). In terms of biological role, probable serine/threonine kinase that acts as a positive regulator of brassinosteroid (BR) signaling downstream of the receptor kinase BRI1. Functions redundantly with BSK3, BSK6, BSK7 and BSK8. The protein is Serine/threonine-protein kinase BSK4 of Arabidopsis thaliana (Mouse-ear cress).